The following is a 128-amino-acid chain: Small ribosomal subunit protein eS8 (128 aa).

Residues 1 to 37 (MGYFQGNDFRKITGGKKGKHRDKRKFELGSPPTETKL) are disordered. The span at 13 to 23 (TGGKKGKHRDK) shows a compositional bias: basic residues.

This sequence belongs to the eukaryotic ribosomal protein eS8 family. As to quaternary structure, part of the 30S ribosomal subunit.

The sequence is that of Small ribosomal subunit protein eS8 from Sulfurisphaera tokodaii (strain DSM 16993 / JCM 10545 / NBRC 100140 / 7) (Sulfolobus tokodaii).